The sequence spans 303 residues: Large ribosomal subunit protein uL18 (303 aa).

It belongs to the universal ribosomal protein uL18 family. As to quaternary structure, component of the large ribosomal subunit (LSU).

The protein localises to the cytoplasm. It localises to the nucleus. Component of the ribosome, a large ribonucleoprotein complex responsible for the synthesis of proteins in the cell. The small ribosomal subunit (SSU) binds messenger RNAs (mRNAs) and translates the encoded message by selecting cognate aminoacyl-transfer RNA (tRNA) molecules. The large subunit (LSU) contains the ribosomal catalytic site termed the peptidyl transferase center (PTC), which catalyzes the formation of peptide bonds, thereby polymerizing the amino acids delivered by tRNAs into a polypeptide chain. The nascent polypeptides leave the ribosome through a tunnel in the LSU and interact with protein factors that function in enzymatic processing, targeting, and the membrane insertion of nascent chains at the exit of the ribosomal tunnel. The polypeptide is Large ribosomal subunit protein uL18 (RPL5) (Oikopleura dioica (Tunicate)).